Reading from the N-terminus, the 426-residue chain is 5-aminovalerate aminotransferase DavT (426 aa).

Residues 112 to 113 (GS), Tyr-139, and 240 to 243 (DEVQ) contribute to the pyridoxal 5'-phosphate site. The residue at position 269 (Lys-269) is an N6-(pyridoxal phosphate)lysine. Thr-298 serves as a coordination point for pyridoxal 5'-phosphate.

The protein belongs to the class-III pyridoxal-phosphate-dependent aminotransferase family. It depends on pyridoxal 5'-phosphate as a cofactor.

The enzyme catalyses 5-aminopentanoate + 2-oxoglutarate = 5-oxopentanoate + L-glutamate. Functionally, catalyzes the conversion of 5-aminovalerate to 5-oxopentanoate. In Pseudomonas aeruginosa (strain ATCC 15692 / DSM 22644 / CIP 104116 / JCM 14847 / LMG 12228 / 1C / PRS 101 / PAO1), this protein is 5-aminovalerate aminotransferase DavT (davT).